Consider the following 613-residue polypeptide: Zinc metalloproteinase-disintegrin-like VMP-III (613 aa).

The signal sequence occupies residues Met-1–Ser-20. A propeptide spanning residues Ile-21–Pro-190 is cleaved from the precursor. One can recognise a Peptidase M12B domain in the interval Lys-200–Pro-396. Glu-203 is a binding site for Ca(2+). Residue Asn-219 is glycosylated (N-linked (GlcNAc...) asparagine). Asp-287 serves as a coordination point for Ca(2+). Cystine bridges form between Cys-311-Cys-391, Cys-351-Cys-375, and Cys-353-Cys-358. His-336 contacts Zn(2+). Glu-337 is a catalytic residue. 2 residues coordinate Zn(2+): His-340 and His-346. Residues Cys-391, Asn-394, Val-406, Asn-409, Phe-411, Glu-413, Glu-416, and Asp-419 each contribute to the Ca(2+) site. Residues Pro-404–Asn-490 form the Disintegrin domain. Intrachain disulfides connect Cys-407–Cys-436, Cys-418–Cys-431, Cys-420–Cys-426, Cys-430–Cys-453, Cys-444–Cys-450, Cys-449–Cys-475, Cys-462–Cys-482, Cys-469–Cys-501, Cys-494–Cys-506, Cys-513–Cys-563, Cys-528–Cys-574, Cys-541–Cys-551, Cys-558–Cys-600, and Cys-594–Cys-606. A D/ECD-tripeptide motif is present at residues Glu-468–Asp-470. Asn-503 carries N-linked (GlcNAc...) asparagine glycosylation.

Belongs to the venom metalloproteinase (M12B) family. P-III subfamily. P-IIIa sub-subfamily. Monomer. Zn(2+) is required as a cofactor. In terms of tissue distribution, expressed by the venom gland.

The protein resides in the secreted. Snake venom metalloproteinase that impairs hemostasis in the envenomed animal. In Agkistrodon piscivorus leucostoma (Western cottonmouth), this protein is Zinc metalloproteinase-disintegrin-like VMP-III.